The sequence spans 225 residues: 7-cyano-7-deazaguanine synthase (225 aa).

9–19 (YSGGLDSTTCL) contacts ATP. Residues C188, C198, C201, and C204 each contribute to the Zn(2+) site.

It belongs to the QueC family. Zn(2+) is required as a cofactor.

It carries out the reaction 7-carboxy-7-deazaguanine + NH4(+) + ATP = 7-cyano-7-deazaguanine + ADP + phosphate + H2O + H(+). It participates in purine metabolism; 7-cyano-7-deazaguanine biosynthesis. In terms of biological role, catalyzes the ATP-dependent conversion of 7-carboxy-7-deazaguanine (CDG) to 7-cyano-7-deazaguanine (preQ(0)). The protein is 7-cyano-7-deazaguanine synthase of Geobacter sp. (strain M21).